The sequence spans 125 residues: Large ribosomal subunit protein bL12 (125 aa).

It belongs to the bacterial ribosomal protein bL12 family. In terms of assembly, homodimer. Part of the ribosomal stalk of the 50S ribosomal subunit. Forms a multimeric L10(L12)X complex, where L10 forms an elongated spine to which 2 to 4 L12 dimers bind in a sequential fashion. Binds GTP-bound translation factors.

Forms part of the ribosomal stalk which helps the ribosome interact with GTP-bound translation factors. Is thus essential for accurate translation. This Helicobacter pylori (strain HPAG1) protein is Large ribosomal subunit protein bL12.